The sequence spans 156 residues: E3 ubiquitin-protein ligase LAP (156 aa).

The segment at M1–K55 adopts an RING-CH-type zinc-finger fold. At M1–T73 the chain is on the cytoplasmic side. Residues C5, C8, C19, C21, H29, C32, C45, and C48 each contribute to the Zn(2+) site. Residues T74 to L94 form a helical membrane-spanning segment. Residues S95 to S111 are Lumenal-facing. The chain crosses the membrane as a helical span at residues I112–V132. At V133–V156 the chain is on the cytoplasmic side.

This sequence belongs to the poxviridae LAP protein family.

Its subcellular location is the host membrane. The protein resides in the host Golgi apparatus. It is found in the host trans-Golgi network membrane. It localises to the host early endosome membrane. It catalyses the reaction S-ubiquitinyl-[E2 ubiquitin-conjugating enzyme]-L-cysteine + [acceptor protein]-L-lysine = [E2 ubiquitin-conjugating enzyme]-L-cysteine + N(6)-ubiquitinyl-[acceptor protein]-L-lysine.. E3 ubiquitin-protein ligase which promotes ubiquitination and subsequent degradation of host MHC-I and CD4 molecules, presumably to prevent lysis of infected cells by cytotoxic T-lymphocytes and NK cell. Binds target molecules through transmembrane interaction. The result of this ubiquitination is the enhancement of the endocytosis of the target chain and the delivery to the lysosome, where it is proteolytically destroyed. This Yaba-like disease virus (YLDV) protein is E3 ubiquitin-protein ligase LAP.